We begin with the raw amino-acid sequence, 391 residues long: Phosphoprotein (391 aa).

The interval 1-194 (MDQFIKQDET…GSLSGATLYA (194 aa)) is N-terminus domain. 5 positions are modified to phosphothreonine: T10, T16, T91, T150, and T165. S188 carries the phosphoserine modification. The multimerization stretch occupies residues 216–279 (ISANEIMDLL…MATVKIMDPG (64 aa)). The stretch at 218–245 (ANEIMDLLRGMDARLQHLEQKVDKVLAQ) forms a coiled coil. Phosphothreonine is present on T250. A Phosphoserine modification is found at S257. Phosphothreonine is present on residues T258 and T282. Residues S292 and S294 each carry the phosphoserine modification. T298 carries the post-translational modification Phosphothreonine. A phosphoserine mark is found at S301 and S374. Positions 343–391 (AGQKVMITKMITDCVANPQMKQAFEQRLAKASTEDALNDIKRDIIRSAI) are interaction with the nucleoprotein. At T375 the chain carries Phosphothreonine.

Belongs to the rubulavirus/avulavirus P protein family. Homotetramer. Interacts (via multimerization domain) with polymerase L; this interaction forms the polymerase L-P complex. Interacts (via N-terminus) with N0 (via Ncore); this interaction allows P to chaperon N0 to avoid N polymerization before encapsidation. Interacts (via C-terminus) with N-RNA template; this interaction positions the polymerase on the template for both transcription and replication. Interacts with host RPS6KB1 kinase; this interaction may play a role in the viral replication and transcription.

Its subcellular location is the virion. Functionally, essential cofactor of the RNA polymerase L that plays a central role in the transcription and replication by forming the polymerase complex with RNA polymerase L and recruiting L to the genomic N-RNA template for RNA synthesis. Also plays a central role in the encapsidation of nascent RNA chains by forming the encapsidation complex with the nucleocapsid protein N (N-P complex). Acts as a chaperone for newly synthesized free N protein, so-called N0, allowing encapsidation of nascent RNA chains during replication. The nucleoprotein protein N prevents excessive phosphorylation of P, which leads to down-regulation of viral transcription/ replication. Participates, together with N, in the formation of viral factories (viroplasms), which are large inclusions in the host cytoplasm where replication takes place. The polypeptide is Phosphoprotein (Homo sapiens (Human)).